The primary structure comprises 87 residues: U14-lycotoxin-Ls1b (87 aa).

The N-terminal stretch at 1-20 (MNSKVFVVLLLLALSTCVLS) is a signal peptide. Positions 21–66 (EKYCPTPRNTSCKKMNIRNNCCRDSDCTSNAFCCAEPCGNFCHKAS) constitute a WAP domain. Intrachain disulfides connect cysteine 24-cysteine 54, cysteine 32-cysteine 58, cysteine 41-cysteine 53, cysteine 42-cysteine 80, and cysteine 47-cysteine 62.

Belongs to the venom protein 11 family. 01 (wap-1) subfamily. Post-translationally, contains 5 disulfide bonds. As to expression, expressed by the venom gland.

It is found in the secreted. Its function is as follows. Has antibacterial activity. This is U14-lycotoxin-Ls1b from Lycosa singoriensis (Wolf spider).